A 218-amino-acid polypeptide reads, in one-letter code: UPF0126 membrane protein SCO4104 (218 aa).

7 helical membrane passes run Leu-8–Val-28, Gly-37–Ile-57, Ala-64–Val-84, Leu-91–Ala-111, Gly-118–Ile-138, Leu-154–Val-174, and Ala-179–Ile-199.

It belongs to the UPF0126 family.

Its subcellular location is the cell membrane. The protein is UPF0126 membrane protein SCO4104 of Streptomyces coelicolor (strain ATCC BAA-471 / A3(2) / M145).